Here is a 208-residue protein sequence, read N- to C-terminus: Protein GrpE (208 aa).

Positions 1–25 (MVDNKDFNEELKENIQEELDNETKA) are enriched in basic and acidic residues. The interval 1 to 38 (MVDNKDFNEELKENIQEELDNETKAENPNIDEEVEEVS) is disordered. Residues 29-38 (NIDEEVEEVS) show a composition bias toward acidic residues.

It belongs to the GrpE family. In terms of assembly, homodimer.

It is found in the cytoplasm. Its function is as follows. Participates actively in the response to hyperosmotic and heat shock by preventing the aggregation of stress-denatured proteins, in association with DnaK and GrpE. It is the nucleotide exchange factor for DnaK and may function as a thermosensor. Unfolded proteins bind initially to DnaJ; upon interaction with the DnaJ-bound protein, DnaK hydrolyzes its bound ATP, resulting in the formation of a stable complex. GrpE releases ADP from DnaK; ATP binding to DnaK triggers the release of the substrate protein, thus completing the reaction cycle. Several rounds of ATP-dependent interactions between DnaJ, DnaK and GrpE are required for fully efficient folding. The protein is Protein GrpE of Clostridium perfringens (strain ATCC 13124 / DSM 756 / JCM 1290 / NCIMB 6125 / NCTC 8237 / Type A).